We begin with the raw amino-acid sequence, 929 residues long: Isoleucine--tRNA ligase (929 aa).

Positions 58 to 68 (PYANGDIHIGH) match the 'HIGH' region motif. Position 563 (glutamate 563) interacts with L-isoleucyl-5'-AMP. Residues 605 to 609 (KMSKS) carry the 'KMSKS' region motif. Lysine 608 serves as a coordination point for ATP. Positions 892, 895, 912, and 915 each coordinate Zn(2+).

The protein belongs to the class-I aminoacyl-tRNA synthetase family. IleS type 1 subfamily. Monomer. Zn(2+) is required as a cofactor.

The protein localises to the cytoplasm. It carries out the reaction tRNA(Ile) + L-isoleucine + ATP = L-isoleucyl-tRNA(Ile) + AMP + diphosphate. Its function is as follows. Catalyzes the attachment of isoleucine to tRNA(Ile). As IleRS can inadvertently accommodate and process structurally similar amino acids such as valine, to avoid such errors it has two additional distinct tRNA(Ile)-dependent editing activities. One activity is designated as 'pretransfer' editing and involves the hydrolysis of activated Val-AMP. The other activity is designated 'posttransfer' editing and involves deacylation of mischarged Val-tRNA(Ile). The sequence is that of Isoleucine--tRNA ligase from Neisseria gonorrhoeae (strain NCCP11945).